Here is a 683-residue protein sequence, read N- to C-terminus: UvrABC system protein B (683 aa).

The Helicase ATP-binding domain maps to 31-414; it reads AGFEKGYKEQ…ELERTDHKVE (384 aa). 44–51 is a binding site for ATP; that stretch reads GATGTGKT. Residues 97–120 carry the Beta-hairpin motif; that stretch reads YYDYYQPEAYVPQSDTYIEKDSAI. The Helicase C-terminal domain occupies 435–601; it reads QIDDLVGEIN…TIIKPVHDVI (167 aa). The 36-residue stretch at 632 to 667 folds into the UVR domain; the sequence is KTMIKNLQEQMKEAAKKLDFEEAANLRDAIMELQSS. The tract at residues 662–683 is disordered; the sequence is MELQSSSRRPKTRKGKALNGKR. Residues 669 to 683 are compositionally biased toward basic residues; that stretch reads RRPKTRKGKALNGKR.

This sequence belongs to the UvrB family. Forms a heterotetramer with UvrA during the search for lesions. Interacts with UvrC in an incision complex.

The protein resides in the cytoplasm. The UvrABC repair system catalyzes the recognition and processing of DNA lesions. A damage recognition complex composed of 2 UvrA and 2 UvrB subunits scans DNA for abnormalities. Upon binding of the UvrA(2)B(2) complex to a putative damaged site, the DNA wraps around one UvrB monomer. DNA wrap is dependent on ATP binding by UvrB and probably causes local melting of the DNA helix, facilitating insertion of UvrB beta-hairpin between the DNA strands. Then UvrB probes one DNA strand for the presence of a lesion. If a lesion is found the UvrA subunits dissociate and the UvrB-DNA preincision complex is formed. This complex is subsequently bound by UvrC and the second UvrB is released. If no lesion is found, the DNA wraps around the other UvrB subunit that will check the other stand for damage. The chain is UvrABC system protein B from Lactobacillus acidophilus (strain ATCC 700396 / NCK56 / N2 / NCFM).